A 189-amino-acid polypeptide reads, in one-letter code: HGPRTase-like protein 1 (189 aa).

The protein belongs to the purine/pyrimidine phosphoribosyltransferase family. Archaeal HPRT subfamily.

Its function is as follows. May catalyze a purine salvage reaction, the substrate is unknown. This Natrialba magadii (strain ATCC 43099 / DSM 3394 / CCM 3739 / CIP 104546 / IAM 13178 / JCM 8861 / NBRC 102185 / NCIMB 2190 / MS3) (Natronobacterium magadii) protein is HGPRTase-like protein 1.